The primary structure comprises 177 residues: MSRVGKAPIALPKGAEVNVAAGVLSVKGPLGTLSQPIHSLVKVNVENDTLTFAPADESREANALQGTMRALAANMVKGVTTGFERKLNLVGVGYRAQLQGAALKLQLGFSHDVIHEMPEGVKAETPTQTEIIIKGADKQKVGQVAAEVRAYRPPEPYKGKGVRYSDERVILKETKKK.

Belongs to the universal ribosomal protein uL6 family. Part of the 50S ribosomal subunit.

In terms of biological role, this protein binds to the 23S rRNA, and is important in its secondary structure. It is located near the subunit interface in the base of the L7/L12 stalk, and near the tRNA binding site of the peptidyltransferase center. The protein is Large ribosomal subunit protein uL6 of Cupriavidus pinatubonensis (strain JMP 134 / LMG 1197) (Cupriavidus necator (strain JMP 134)).